The following is a 459-amino-acid chain: Cysteine--tRNA ligase (459 aa).

Cysteine 28 is a Zn(2+) binding site. Positions 30-40 match the 'HIGH' region motif; it reads VTIYDLCHIGH. Zn(2+)-binding residues include cysteine 209, histidine 234, and glutamate 238. The 'KMSKS' region signature appears at 266 to 270; the sequence is KMSKS. Lysine 269 provides a ligand contact to ATP.

Belongs to the class-I aminoacyl-tRNA synthetase family. In terms of assembly, monomer. Zn(2+) is required as a cofactor.

It is found in the cytoplasm. It carries out the reaction tRNA(Cys) + L-cysteine + ATP = L-cysteinyl-tRNA(Cys) + AMP + diphosphate. This is Cysteine--tRNA ligase from Shewanella pealeana (strain ATCC 700345 / ANG-SQ1).